Consider the following 498-residue polypeptide: MGDRGGAGSSRRRRTGSRVSVQGGSGPKVEEDEVREAAVSPDLGAGGDAPAPAPAPAHTRDKDRQTSVGDGHWELRCHRLQDSLFSSDSGFSNYRGILNWCVVMLILSNARLSLENLIKYGILVDPIQVVSLFLKDPYSWPAPCLIIASNIFIVATFQIEKRLSVGALTEQMGLLLHVVNLATIICFPAAVALLVESITPVGSLFALASYSIIFLKLSSYRDVNLWCRQRRVKAKAVSAGKKVSGAAAQNTVSYPDNLTYRDLYYFIFAPTLCYELNFPRSPRIRKRFLLRRVLEMLFFTQLQVGLIQQWMVPTIQNSMKPFKDMDYSRIIERLLKLAVPNHLIWLIFFYWLFHSCLNAVAELLQFGDREFYRDWWNAESVTYFWQNWNIPVHKWCIRHFYKPMLRLGSNKWMARTGVFWASAFFHEYLVSIPLRMFRLWAFTAMMAQVPLAWIVNRFFQGNYGNAAVWVTLIIGQPVAVLMYVHDYYVLNYDAPVGA.

Residues 1 to 66 (MGDRGGAGSS…AHTRDKDRQT (66 aa)) are disordered. Topologically, residues 1 to 92 (MGDRGGAGSS…SLFSSDSGFS (92 aa)) are cytoplasmic. Residues 1-96 (MGDRGGAGSS…SDSGFSNYRG (96 aa)) are involved in homomerization. Position 20 is a phosphoserine (Ser-20). Residues 58-68 (HTRDKDRQTSV) show a composition bias toward basic and acidic residues. The chain crosses the membrane as a helical span at residues 93 to 127 (NYRGILNWCVVMLILSNARLSLENLIKYGILVDPI). At 128-139 (QVVSLFLKDPYS) the chain is on the lumenal side. The extracellular loop 1 (EL1) stretch occupies residues 128–139 (QVVSLFLKDPYS). Residues 140–165 (WPAPCLIIASNIFIVATFQIEKRLSV) form a helical membrane-spanning segment. Residues 140–498 (WPAPCLIIAS…VLNYDAPVGA (359 aa)) are MBOAT fold. Over 166 to 170 (GALTE) the chain is Cytoplasmic. A helical membrane pass occupies residues 171–193 (QMGLLLHVVNLATIICFPAAVAL). Residues 194 to 200 (LVESITP) are Lumenal-facing. A helical membrane pass occupies residues 201–232 (VGSLFALASYSIIFLKLSSYRDVNLWCRQRRV). The Cytoplasmic segment spans residues 233–284 (KAKAVSAGKKVSGAAAQNTVSYPDNLTYRDLYYFIFAPTLCYELNFPRSPRI). The segment at 235–287 (KAVSAGKKVSGAAAQNTVSYPDNLTYRDLYYFIFAPTLCYELNFPRSPRIRKR) is intracellular loop 1 (IL1). A helical transmembrane segment spans residues 285 to 319 (RKRFLLRRVLEMLFFTQLQVGLIQQWMVPTIQNSM). Over 320–326 (KPFKDMD) the chain is Lumenal. The helical transmembrane segment at 327-364 (YSRIIERLLKLAVPNHLIWLIFFYWLFHSCLNAVAELL) threads the bilayer. The Cytoplasmic portion of the chain corresponds to 365–410 (QFGDREFYRDWWNAESVTYFWQNWNIPVHKWCIRHFYKPMLRLGSN). Residues 365 to 410 (QFGDREFYRDWWNAESVTYFWQNWNIPVHKWCIRHFYKPMLRLGSN) form an intracellular loop 2 (IL2) region. The FYXDWWN motif motif lies at 371–377 (FYRDWWN). An acyl-CoA contacts are provided by residues 385 to 393 (WQNWNIPVH), Tyr-401, and Arg-415. The amphipathic helix (AH) stretch occupies residues 391–405 (PVHKWCIRHFYKPML). A helical transmembrane segment spans residues 411-431 (KWMARTGVFWASAFFHEYLVS). His-426 is an active-site residue. At 432-439 (IPLRMFRL) the chain is on the lumenal side. The chain crosses the membrane as a helical span at residues 440 to 458 (WAFTAMMAQVPLAWIVNRF). Over 459–460 (FQ) the chain is Cytoplasmic. A helical membrane pass occupies residues 461-492 (GNYGNAAVWVTLIIGQPVAVLMYVHDYYVLNY). Residue Tyr-488 coordinates an acyl-CoA. Residues 493 to 498 (DAPVGA) lie on the Lumenal side of the membrane.

It belongs to the membrane-bound acyltransferase family. Sterol o-acyltransferase subfamily. In terms of assembly, homodimer or homotetramer; both forms have similar enzymatic activities.

It is found in the endoplasmic reticulum membrane. The enzyme catalyses an acyl-CoA + a 1,2-diacyl-sn-glycerol = a triacyl-sn-glycerol + CoA. The catalysed reaction is all-trans-retinol + an acyl-CoA = an all-trans-retinyl ester + CoA. It catalyses the reaction 2-(9Z-octadecenoyl)-glycerol + (9Z)-octadecenoyl-CoA = 1,2-di-(9Z-octadecenoyl)-sn-glycerol + CoA. It carries out the reaction 1,2-di-(9Z-octadecenoyl)-sn-glycerol + (9Z)-octadecenoyl-CoA = 1,2,3-tri-(9Z-octadecenoyl)-glycerol + CoA. The enzyme catalyses all-trans-retinol + hexadecanoyl-CoA = all-trans-retinyl hexadecanoate + CoA. The catalysed reaction is 1-O-(9Z-octadecenyl)-glycerol + (9Z)-octadecenoyl-CoA = 1-O-(9Z-octadecyl)-3-(9Z-octadecenoyl)-glycerol + CoA. It catalyses the reaction 1-O-(9Z-octadecyl)-3-(9Z-octadecenoyl)-glycerol + (9Z)-octadecenoyl-CoA = 1-O-(9Z-octadecenyl)-2,3-di-(9Z-octadecenoyl)glycerol + CoA. It carries out the reaction 1-(9Z-octadecenoyl)-glycerol + (9Z)-octadecenoyl-CoA = 1,2-di-(9Z-octadecenoyl)-glycerol + CoA. The enzyme catalyses 1,2-di-(9Z-octadecenoyl)-glycerol + (9Z)-octadecenoate + H(+) = 1,2,3-tri-(9Z-octadecenoyl)-glycerol + H2O. The catalysed reaction is 1-octadecanoyl-2-(5Z,8Z,11Z,14Z-eicosatetraenoyl)-sn-glycerol + (9Z)-octadecenoyl-CoA = 1-octadecanoyl-2-(5Z,8Z,11Z,14Z)-eicosatetraenoyl-3-(9Z)-octadecenoyl-sn-glycerol + CoA. It catalyses the reaction hexadecane-1,2-diol + 2 hexadecanoyl-CoA = 1,2-O,O-dihexadecanoyl-1,2-hexadecanediol + 2 CoA. It carries out the reaction hexadecane-1,2-diol + hexadecanoyl-CoA = 2-hydroxyhexadecyl hexadecanoate + CoA. The enzyme catalyses 2-(9Z-octadecenoyl)-glycerol + hexadecanoyl-CoA = 1-hexadecanoyl-2-(9Z-octadecenoyl)-sn-glycerol + CoA. The catalysed reaction is 1,2-di-(9Z-octadecenoyl)-sn-glycerol + hexadecanoyl-CoA = 1,2-di-(9Z)-octadecenoyl-3-hexadecanoyl-sn-glycerol + CoA. It catalyses the reaction hexadecan-1-ol + hexadecanoyl-CoA = hexadecanyl hexadecanoate + CoA. It carries out the reaction 13-cis-retinol + hexadecanoyl-CoA = 13-cis-retinyl hexadecanoate + CoA. The enzyme catalyses 1,3-di-(9Z-octadecenoyl)-glycerol + (9Z)-octadecenoyl-CoA = 1,2,3-tri-(9Z-octadecenoyl)-glycerol + CoA. The catalysed reaction is 2,3-di-(9Z)-octadecenoyl-sn-glycerol + (9Z)-octadecenoyl-CoA = 1,2,3-tri-(9Z-octadecenoyl)-glycerol + CoA. It functions in the pathway lipid metabolism; glycerolipid metabolism. Functionally, catalyzes the terminal and only committed step in triacylglycerol synthesis by using diacylglycerol and fatty acyl CoA as substrates. Highly expressed in epithelial cells of the small intestine and its activity is essential for the absorption of dietary fats. In liver, plays a role in esterifying exogenous fatty acids to glycerol, and is required to synthesize fat for storage. Also present in female mammary glands, where it produces fat in the milk. May be involved in VLDL (very low density lipoprotein) assembly. In contrast to DGAT2 it is not essential for survival. Functions as the major acyl-CoA retinol acyltransferase (ARAT) in the skin, where it acts to maintain retinoid homeostasis and prevent retinoid toxicity leading to skin and hair disorders. Exhibits additional acyltransferase activities, includin acyl CoA:monoacylglycerol acyltransferase (MGAT), wax monoester and wax diester synthases. Also able to use 1-monoalkylglycerol (1-MAkG) as an acyl acceptor for the synthesis of monoalkyl-monoacylglycerol (MAMAG). The sequence is that of Diacylglycerol O-acyltransferase 1 from Rattus norvegicus (Rat).